A 698-amino-acid polypeptide reads, in one-letter code: Protein artemis (698 aa).

Thr-380 is modified (phosphothreonine). A Phosphoserine modification is found at Ser-385. 3 disordered regions span residues 445–485, 505–595, and 620–669; these read ANFV…DPDV, LENL…DSIS, and NGVP…LPKP. Residues 449-461 show a composition bias toward acidic residues; the sequence is DCDESNSDSEGEL. Positions 508 to 521 are enriched in polar residues; sequence LPSSIETGGSQSPK. The span at 538 to 551 shows a compositional bias: low complexity; sequence THISSQNSSQSTHI. Polar residues predominate over residues 552-583; the sequence is TDQGSQGWDSQCDTVLLSSQEKSGGDSTSLNK. The segment covering 641–655 has biased composition (low complexity); it reads TSLTSTQADSQSSSD. Position 650 is a phosphoserine; by ATM (Ser-650).

It belongs to the DNA repair metallo-beta-lactamase (DRMBL) family. As to quaternary structure, interacts with LIG4; the interaction is direct. Interacts with ATM. Interacts with BRCA1. Interacts with PRKDC. Interacts with TP53BP1. Also exhibits ATM- and phosphorylation-dependent interaction with the MRN complex, composed of MRE11, RAD50, and NBN. Phosphorylation on undefined residues by PRKDC may stimulate endonucleolytic activity on 5' and 3' hairpins and overhangs. PRKDC must remain present, even after phosphorylation, for efficient hairpin opening. Also phosphorylated by ATM in response to ionizing radiation (IR) and by ATR in response to ultraviolet (UV) radiation.

It is found in the nucleus. In terms of biological role, required for V(D)J recombination, the process by which exons encoding the antigen-binding domains of immunoglobulins and T-cell receptor proteins are assembled from individual V, (D), and J gene segments. V(D)J recombination is initiated by the lymphoid specific RAG endonuclease complex, which generates site specific DNA double strand breaks (DSBs). These DSBs present two types of DNA end structures: hairpin sealed coding ends and phosphorylated blunt signal ends. These ends are independently repaired by the non homologous end joining (NHEJ) pathway to form coding and signal joints respectively. This protein exhibits single-strand specific 5'-3' exonuclease activity in isolation, and acquires endonucleolytic activity on 5' and 3' hairpins and overhangs when in a complex with PRKDC. The latter activity is required specifically for the resolution of closed hairpins prior to the formation of the coding joint. May also be required for the repair of complex DSBs induced by ionizing radiation, which require substantial end-processing prior to religation by NHEJ. This chain is Protein artemis (Dclre1c), found in Rattus norvegicus (Rat).